The following is a 445-amino-acid chain: UDP-N-acetylmuramate--L-alanine ligase (445 aa).

113 to 119 (GSHGKTS) contributes to the ATP binding site.

This sequence belongs to the MurCDEF family.

It is found in the cytoplasm. The catalysed reaction is UDP-N-acetyl-alpha-D-muramate + L-alanine + ATP = UDP-N-acetyl-alpha-D-muramoyl-L-alanine + ADP + phosphate + H(+). It functions in the pathway cell wall biogenesis; peptidoglycan biosynthesis. Its function is as follows. Cell wall formation. The protein is UDP-N-acetylmuramate--L-alanine ligase of Enterococcus faecalis (strain ATCC 700802 / V583).